A 141-amino-acid chain; its full sequence is Ribonuclease VapC2 (141 aa).

In terms of domain architecture, PINc spans L7 to Q129. D99, D117, and D119 together coordinate Mg(2+).

It belongs to the PINc/VapC protein family. Probably active as a homodimer. Mg(2+) is required as a cofactor.

In terms of biological role, toxic component of a type II toxin-antitoxin (TA) system. Acts as an RNase. All its toxic effects are neutralized by coexpression with cognate antitoxin VapB2. The sequence is that of Ribonuclease VapC2 from Mycobacterium tuberculosis (strain CDC 1551 / Oshkosh).